Consider the following 27-residue polypeptide: MIKPDGVQRGLVGEIISRGDFAIDIGR.

Lysine 3 lines the ATP pocket.

Belongs to the NDK family. Requires Mg(2+) as cofactor.

The enzyme catalyses a 2'-deoxyribonucleoside 5'-diphosphate + ATP = a 2'-deoxyribonucleoside 5'-triphosphate + ADP. It carries out the reaction a ribonucleoside 5'-diphosphate + ATP = a ribonucleoside 5'-triphosphate + ADP. In terms of biological role, major role in the synthesis of nucleoside triphosphates other than ATP. The ATP gamma phosphate is transferred to the NDP beta phosphate via a ping-pong mechanism, using a phosphorylated active-site intermediate. In Pseudotsuga menziesii (Douglas-fir), this protein is Nucleoside diphosphate kinase 2.